The following is a 1119-amino-acid chain: MKRSLRKMWRPGEKKEPQGVVYEDVPDDTEDFKESLKVVFEGSAYGLQNFNKQKKLKRCDDMDTFFLHYAAAEGQIELMEKITRDSSLEVLHEMDDYGNTPLHCAVEKNQIESVKFLLSRGANPNLRNFNMMAPLHIAVQGMNNEVMKVLLEHRTIDVNLEGENGNTAVIIACTTNNSEALQILLKKGAKPCKSNKWGCFPIHQAAFSGSKECMEIILRFGEEHGYSRQLHINFMNNGKATPLHLAVQNGDLEMIKMCLDNGAQIDPVEKGRCTAIHFAATQGATEIVKLMISSYSGSVDIVNTTDGCHETMLHRASLFDHHELADYLISVGADINKIDSEGRSPLILATASASWNIVNLLLSKGAQVDIKDNFGRNFLHLTVQQPYGLKNLRPEFMQMQQIKELVMDEDNDGCTPLHYACRQGGPGSVNNLLGFNVSIHSKSKDKKSPLHFAASYGRINTCQRLLQDISDTRLLNEGDLHGMTPLHLAAKNGHDKVVQLLLKKGALFLSDHNGWTALHHASMGGYTQTMKVILDTNLKCTDRLDEDGNTALHFAAREGHAKAVALLLSHNADIVLNKQQASFLHLALHNKRKEVVLTIIRSKRWDECLKIFSHNSPGNKCPITEMIEYLPECMKVLLDFCMLHSTEDKSCRDYYIEYNFKYLQCPLEFTKKTPTQDVIYEPLTALNAMVQNNRIELLNHPVCKEYLLMKWLAYGFRAHMMNLGSYCLGLIPMTILVVNIKPGMAFNSTGIINETSDHSEILDTTNSYLIKTCMILVFLSSIFGYCKEAGQIFQQKRNYFMDISNVLEWIIYTTGIIFVLPLFVEIPAHLQWQCGAIAVYFYWMNFLLYLQRFENCGIFIVMLEVILKTLLRSTVVFIFLLLAFGLSFYILLNLQDPFSSPLLSIIQTFSMMLGDINYRESFLEPYLRNELAHPVLSFAQLVSFTIFVPIVLMNLLIGLAVGDIAEVQKHASLKRIAMQVELHTSLEKKLPLWFLRKVDQKSTIVYPNKPRSGGMLFHIFCFLFCTGEIRQEIPNADKSLEMEILKQKYRLKDLTFLLEKQHELIKLIIQKMEIISETEDDDSHCSFQDRFKKEQMEQRNSRWNTVLRAVKAKTHHLEP.

At 1 to 718 the chain is on the cytoplasmic side; it reads MKRSLRKMWR…MKWLAYGFRA (718 aa). ANK repeat units lie at residues 62–92, 97–126, 130–160, 164–193, 197–226, 238–267, 271–301, 308–337, 341–370, 374–403, 412–441, 445–474, 481–510, 513–542, 547–576, and 579–609; these read MDTF…EVLH, YGNT…NPNL, NMMA…DVNL, NGNT…KPCK, WGCF…EHGY, GKAT…QIDP, GRCT…SVDI, CHET…DINK, EGRS…QVDI, FGRN…QQIK, DGCT…SIHS, DKKS…DTRL, HGMT…LFLS, NGWT…KCTD, DGNT…DIVL, and QQAS…DECL. Cystine bridges form between Cys-192–Cys-665, Cys-462–Cys-665, Cys-608–Cys-621, Cys-621–Cys-665, and Cys-633–Cys-856. Pro-394 is modified (4-hydroxyproline; by EGLN1; transient; in normoxia and hyperoxia). Residues Cys-414 and Cys-421 each coordinate (E)-cinnamaldehyde. Cys-621 is a (E)-cinnamaldehyde binding site. Cys-633 carries the post-translational modification Cysteine sulfenic acid (-SOH); transient; in hyperoxia. (E)-cinnamaldehyde contacts are provided by Cys-641, Cys-665, and Lys-710. The helical transmembrane segment at 719-739 threads the bilayer; it reads HMMNLGSYCLGLIPMTILVVN. Residues 740-767 are Extracellular-facing; it reads IKPGMAFNSTGIINETSDHSEILDTTNS. N-linked (GlcNAc...) asparagine glycans are attached at residues Asn-747 and Asn-753. The chain crosses the membrane as a helical span at residues 768–793; it reads YLIKTCMILVFLSSIFGYCKEAGQIF. Residues Glu-788 and Gln-791 each coordinate Ca(2+). At 794 to 798 the chain is on the cytoplasmic side; it reads QQKRN. The helical transmembrane segment at 799 to 823 threads the bilayer; sequence YFMDISNVLEWIIYTTGIIFVLPLF. Residues Asn-805 and Glu-808 each coordinate Ca(2+). Topologically, residues 824–829 are extracellular; that stretch reads VEIPAH. A helical transmembrane segment spans residues 830 to 850; that stretch reads LQWQCGAIAVYFYWMNFLLYL. At 851 to 862 the chain is on the cytoplasmic side; the sequence is QRFENCGIFIVM. Residue Cys-856 is modified to Cysteine sulfenic acid (-SOH); transient; in hyperoxia. The helical transmembrane segment at 863 to 892 threads the bilayer; sequence LEVILKTLLRSTVVFIFLLLAFGLSFYILL. The Extracellular portion of the chain corresponds to 893–901; it reads NLQDPFSSP. The pore-forming intramembrane region spans 902 to 922; that stretch reads LLSIIQTFSMMLGDINYRESF. Over 923–933 the chain is Extracellular; that stretch reads LEPYLRNELAH. A helical transmembrane segment spans residues 934-960; it reads PVLSFAQLVSFTIFVPIVLMNLLIGLA. The Cytoplasmic portion of the chain corresponds to 961 to 1119; sequence VGDIAEVQKH…VKAKTHHLEP (159 aa). Positions 1042–1071 form a coiled coil; the sequence is MEILKQKYRLKDLTFLLEKQHELIKLIIQK. 1046-1052 is a binding site for a 1,2-diacyl-sn-glycero-3-phospho-(1D-myo-inositol); that stretch reads KQKYRLK.

Belongs to the transient receptor (TC 1.A.4) family. In terms of assembly, homotetramer. Interacts with TMEM100. Interacts with EGLN1. Interacts with the scorpion wasabi receptor toxin at the same site that electrophiles but in a non-covalent manner. In terms of processing, TRPA1 activation by electrophiles occurs though covalent modification of specific cysteine residues in the N-terminal cytoplasmic domain. Post-translationally, hydroxylation is required for TRPA1 activity inhibition in normoxia. In hypoxia, the decrease in oxygen concentration diminishes the activity of the hydroxylase EGLN1, thus relieving TRPA1 from inhibition and ultimately leading to channel activation. Oxidation of Cys-633 and Cys-856 in hyperoxia may override the hydroxylase EGLN1-mediated inhibition, causing TRPA1 activation.

The protein localises to the cell membrane. The catalysed reaction is Ca(2+)(in) = Ca(2+)(out). It carries out the reaction Mg(2+)(in) = Mg(2+)(out). It catalyses the reaction Na(+)(in) = Na(+)(out). The enzyme catalyses K(+)(in) = K(+)(out). The catalysed reaction is Zn(2+)(in) = Zn(2+)(out). Electrophilic ligands activate the channel by covalent modification of intracellular cysteines; Cys-621 plays a key role in covalent binding of electrophiles. Extracellular Ca(2+) both potentiates and inactivates TRPA1; a rapid potentiation follows by slow desensitization. Activated by increase in intracellular Ca(2+) concentration. Inhibited by the potent blocker of TRPV channels ruthenium red, A-967079, AP-18, HC-030031, and aryl sulfonamide derivative (S)-N-(4-chlorobenzyl)-1-((4-fluorophenyl)sulfonyl)pyrrolidine-2-carboxamide (ASD). Activated by benzyl isothiocyanate (BITC), iodoacetamide, sulfhydryl reactive agent MTSEA, N-methyl maleimide (NMM), N-ethylmaleimide (NEM), and 2-aminoethyldiphenylborinate (2-APB). Also activated by hyperoxia. Acivated by intracellular Zn(2+). TRPA1 activation may critically depend on the presence of small intracellular compounds such as polyphosphates. Ligand-activated Ca(2+)-permeable, nonselective cation channel involved in pain detection and possibly also in cold perception, oxygen concentration perception, cough, itch, and inner ear function. Has a relatively high Ca(2+) selectivity, with a preference for divalent over monovalent cations (Ca(2+) &gt; Ba(2+) &gt; Mg(2+) &gt; NH4(+) &gt; Li(+) &gt; K(+)), the influx of cation into the cytoplasm leads to membrane depolarization. Has a central role in the pain response to endogenous inflammatory mediators, such as bradykinin and to a diverse array of irritants. Activated by a large variety of structurally unrelated electrophilic and non-electrophilic chemical compounds, such as allylthiocyanate (AITC) from mustard oil or wasabi, cinnamaldehyde, diallyl disulfide (DADS) from garlic, and acrolein, an environmental irritant. Electrophilic ligands activate TRPA1 by interacting with critical N-terminal Cys residues in a covalent manner. Non-electrophile agonists bind at distinct sites in the transmembrane domain to promote channel activation. Also acts as an ionotropic cannabinoid receptor by being activated by delta(9)-tetrahydrocannabinol (THC), the psychoactive component of marijuana. May be a component for the mechanosensitive transduction channel of hair cells in inner ear, thereby participating in the perception of sounds. This is Transient receptor potential cation channel subfamily A member 1 from Homo sapiens (Human).